Here is a 225-residue protein sequence, read N- to C-terminus: Transmembrane emp24 domain-containing protein p24delta11 (225 aa).

An N-terminal signal peptide occupies residues 1-35; that stretch reads MDLLPSRYKIHKTKLRWILTMMTMMMMMVMRRGES. At 36–193 the chain is on the lumenal side; it reads MRLDMESGNT…ELNRSTNSRM (158 aa). One can recognise a GOLD domain in the interval 45–160; that stretch reads TKCISDDIKT…ITMLEVEVRK (116 aa). The stretch at 175–188 forms a coiled coil; that stretch reads LIEREREMQELNRS. Omega-N-methylated arginine is present on Arg178. A glycan (N-linked (GlcNAc...) asparagine) is linked at Asn186. Residues 194-210 traverse the membrane as a helical segment; sequence AALSLLSFVVTMSVAGL. Residues 211–225 lie on the Cytoplasmic side of the membrane; it reads QLRHLKSFLERKKLL. Residues 218-219 carry the COPII vesicle coat-binding motif; the sequence is FL. A COPI vesicle coat-binding motif is present at residues 218 to 225; it reads FLERKKLL.

Belongs to the EMP24/GP25L family. In terms of assembly, probably oligomerizes with other members of the EMP24/GP25L family. Associates with the COPI vesicle coat (coatomer). Associates with the COPII vesicle coat (coatomer).

It localises to the endoplasmic reticulum membrane. The protein resides in the golgi apparatus. It is found in the cis-Golgi network membrane. Its subcellular location is the golgi stack membrane. In terms of biological role, involved in vesicular protein trafficking. Mainly functions in the early secretory pathway. Thought to act as cargo receptor at the lumenal side for incorporation of secretory cargo molecules into transport vesicles and to be involved in vesicle coat formation at the cytoplasmic side. This Arabidopsis thaliana (Mouse-ear cress) protein is Transmembrane emp24 domain-containing protein p24delta11.